The sequence spans 476 residues: Glutamate--tRNA ligase (476 aa).

The 'HIGH' region motif lies at 8–18 (PSPTGTLHIGT). A 'KMSKS' region motif is present at residues 247-251 (KLSKR). K250 is a binding site for ATP.

Belongs to the class-I aminoacyl-tRNA synthetase family. Glutamate--tRNA ligase type 1 subfamily. As to quaternary structure, monomer.

It is found in the cytoplasm. The enzyme catalyses tRNA(Glu) + L-glutamate + ATP = L-glutamyl-tRNA(Glu) + AMP + diphosphate. Functionally, catalyzes the attachment of glutamate to tRNA(Glu) in a two-step reaction: glutamate is first activated by ATP to form Glu-AMP and then transferred to the acceptor end of tRNA(Glu). The protein is Glutamate--tRNA ligase of Synechococcus sp. (strain WH7803).